The primary structure comprises 175 residues: Protein-export protein SecB (175 aa).

The segment at 154–175 (QQGGNNNGSDSGIILPPGTTRQ) is disordered.

The protein belongs to the SecB family. Homotetramer, a dimer of dimers. One homotetramer interacts with 1 SecA dimer.

Its subcellular location is the cytoplasm. In terms of biological role, one of the proteins required for the normal export of preproteins out of the cell cytoplasm. It is a molecular chaperone that binds to a subset of precursor proteins, maintaining them in a translocation-competent state. It also specifically binds to its receptor SecA. This chain is Protein-export protein SecB, found in Bordetella petrii (strain ATCC BAA-461 / DSM 12804 / CCUG 43448).